We begin with the raw amino-acid sequence, 1363 residues long: Vascular endothelial growth factor receptor 3 (1363 aa).

An N-terminal signal peptide occupies residues 1 to 24 (MQRGAALCLRLWLCLGLLDGLVSG). Over 25 to 775 (YSMTPPTLNI…EGSEDKGSME (751 aa)) the chain is Extracellular. Ig-like C2-type domains are found at residues 30 to 127 (PTLN…TAAS), 151 to 213 (KDAM…WGDQ), 219 to 326 (PFLV…TEVI), 331 to 415 (PFIS…ISLE), 422 to 552 (PQIH…FYVT), 555 to 671 (PDGF…KYLS), and 678 to 764 (PRLT…ASVA). N-linked (GlcNAc...) asparagine glycosylation is found at Asn-33, Asn-104, Asn-166, Asn-251, Asn-299, and Asn-411. Intrachain disulfides connect Cys-51–Cys-111 and Cys-158–Cys-206. A disulfide bridge connects residues Cys-252 and Cys-310. Disulfide bonds link Cys-445–Cys-534, Cys-466–Cys-486, and Cys-578–Cys-653. N-linked (GlcNAc...) asparagine glycans are attached at residues Asn-515, Asn-527, Asn-594, Asn-683, and Asn-690. The cysteines at positions 699 and 751 are disulfide-linked. N-linked (GlcNAc...) asparagine glycosylation is present at Asn-758. Residues 776–796 (IVILVGTGVIAVFFWVLLLLI) form a helical membrane-spanning segment. At 797 to 1363 (FCNMRRPAHA…RVTFFTDNSY (567 aa)) the chain is on the cytoplasmic side. 3 positions are modified to phosphotyrosine; by SRC: Tyr-830, Tyr-833, and Tyr-853. The region spanning 845–1173 (LHLGRVLGYG…ELVEILGDLL (329 aa)) is the Protein kinase domain. Residues 851–859 (LGYGAFGKV) and Lys-879 contribute to the ATP site. The active-site Proton acceptor is the Asp-1037. Tyr-1063 bears the Phosphotyrosine; by autocatalysis and SRC mark. Phosphotyrosine; by autocatalysis occurs at positions 1068, 1230, 1231, and 1265. A disordered region spans residues 1291–1331 (HRQESGFSCKGPGQNVAVTRAHPDSQGRRRRPERGARGGQV). Residues Tyr-1333 and Tyr-1337 each carry the phosphotyrosine; by autocatalysis and SRC modification. A Phosphotyrosine; by autocatalysis modification is found at Tyr-1363.

This sequence belongs to the protein kinase superfamily. Tyr protein kinase family. CSF-1/PDGF receptor subfamily. In terms of assembly, interacts with VEGFC and VEGFD. Monomer in the absence of bound VEGFC or VEGFD. Homodimer in the presence of bound VEGFC or VEGFD. Can also form a heterodimer with KDR. Interacts with PTPN14; the interaction is enhanced by stimulation with VEGFC. Interacts with CRK, GRB2, PTK2/FAK1, SHC1, PIK3R1 and PTPN11/SHP-2. Identified in a complex with SRC and ITGB1. Post-translationally, autophosphorylated on tyrosine residues upon ligand binding. Autophosphorylation occurs in trans, i.e. one subunit of the dimeric receptor phosphorylates tyrosine residues on the other subunit. Phosphorylation in response to H(2)O(2) is mediated by a process that requires SRC and PRKCD activity. Phosphorylation at Tyr-1068 is required for autophosphorylation at additional tyrosine residues. Phosphorylation at Tyr-1063 and Tyr-1337 is important for interaction with CRK and subsequent activation of MAPK8. Phosphorylation at Tyr-1230, Tyr-1231 and Tyr-1337 is important for interaction with GRB2 and subsequent activation of the AKT1 and MAPK1/ERK2 and/or MAPK3/ERK1 signaling pathways. In response to endothelial cell adhesion onto collagen, can also be phosphorylated in the absence of FLT4 kinase activity by SRC at Tyr-830, Tyr-833, Tyr-853, Tyr-1063, Tyr-1333, and Tyr-1337. Detected in endothelial cells (at protein level). Widely expressed. Detected in fetal spleen, lung and brain. Detected in adult liver, muscle, thymus, placenta, lung, testis, ovary, prostate, heart, and kidney.

The protein resides in the cell membrane. It localises to the cytoplasm. The protein localises to the nucleus. Its subcellular location is the secreted. The catalysed reaction is L-tyrosyl-[protein] + ATP = O-phospho-L-tyrosyl-[protein] + ADP + H(+). With respect to regulation, present in an inactive conformation in the absence of bound ligand. Binding of VEGFC or VEGFD leads to dimerization and activation by autophosphorylation on tyrosine residues. Inhibited by MAZ51. Functionally, tyrosine-protein kinase that acts as a cell-surface receptor for VEGFC and VEGFD, and plays an essential role in adult lymphangiogenesis and in the development of the vascular network and the cardiovascular system during embryonic development. Promotes proliferation, survival and migration of endothelial cells, and regulates angiogenic sprouting. Signaling by activated FLT4 leads to enhanced production of VEGFC, and to a lesser degree VEGFA, thereby creating a positive feedback loop that enhances FLT4 signaling. Modulates KDR signaling by forming heterodimers. The secreted isoform 3 may function as a decoy receptor for VEGFC and/or VEGFD and play an important role as a negative regulator of VEGFC-mediated lymphangiogenesis and angiogenesis. Binding of vascular growth factors to isoform 1 or isoform 2 leads to the activation of several signaling cascades; isoform 2 seems to be less efficient in signal transduction, because it has a truncated C-terminus and therefore lacks several phosphorylation sites. Mediates activation of the MAPK1/ERK2, MAPK3/ERK1 signaling pathway, of MAPK8 and the JUN signaling pathway, and of the AKT1 signaling pathway. Phosphorylates SHC1. Mediates phosphorylation of PIK3R1, the regulatory subunit of phosphatidylinositol 3-kinase. Promotes phosphorylation of MAPK8 at 'Thr-183' and 'Tyr-185', and of AKT1 at 'Ser-473'. The chain is Vascular endothelial growth factor receptor 3 (FLT4) from Homo sapiens (Human).